We begin with the raw amino-acid sequence, 335 residues long: Phosphate acyltransferase (335 aa).

This sequence belongs to the PlsX family. Homodimer. Probably interacts with PlsY.

The protein resides in the cytoplasm. The enzyme catalyses a fatty acyl-[ACP] + phosphate = an acyl phosphate + holo-[ACP]. The protein operates within lipid metabolism; phospholipid metabolism. Functionally, catalyzes the reversible formation of acyl-phosphate (acyl-PO(4)) from acyl-[acyl-carrier-protein] (acyl-ACP). This enzyme utilizes acyl-ACP as fatty acyl donor, but not acyl-CoA. This Brevibacillus brevis (strain 47 / JCM 6285 / NBRC 100599) protein is Phosphate acyltransferase.